Reading from the N-terminus, the 374-residue chain is Amino acid binding protein (374 aa).

A signal peptide spans 1–27 (MSKKLFRKGILALAVSSVMGLSTHALA).

Belongs to the leucine-binding protein family.

Its subcellular location is the periplasm. Binds primarily proteinogenic amino acids. The polypeptide is Amino acid binding protein (Pseudomonas aeruginosa (strain ATCC 15692 / DSM 22644 / CIP 104116 / JCM 14847 / LMG 12228 / 1C / PRS 101 / PAO1)).